We begin with the raw amino-acid sequence, 137 residues long: Ribosome-binding factor A (137 aa).

The protein belongs to the RbfA family. In terms of assembly, monomer. Binds 30S ribosomal subunits, but not 50S ribosomal subunits or 70S ribosomes.

Its subcellular location is the cytoplasm. One of several proteins that assist in the late maturation steps of the functional core of the 30S ribosomal subunit. Associates with free 30S ribosomal subunits (but not with 30S subunits that are part of 70S ribosomes or polysomes). Required for efficient processing of 16S rRNA. May interact with the 5'-terminal helix region of 16S rRNA. The chain is Ribosome-binding factor A from Erwinia tasmaniensis (strain DSM 17950 / CFBP 7177 / CIP 109463 / NCPPB 4357 / Et1/99).